We begin with the raw amino-acid sequence, 206 residues long: Holliday junction branch migration complex subunit RuvA (206 aa).

Residues 1–64 are domain I; it reads MIGRLTGNLV…ETSQQLFGFI (64 aa). Residues 65–142 are domain II; that stretch reads DQQDREFFRM…SWQVTPSVDA (78 aa). Residues 143–154 form a flexible linker region; that stretch reads TGSLVALDSAAP. Positions 155–206 are domain III; that stretch reads SQNAIVAEAESALVALGYKPVEASKAVARVTSDEITRSEDLIRLALRNMIPA.

This sequence belongs to the RuvA family. Homotetramer. Forms an RuvA(8)-RuvB(12)-Holliday junction (HJ) complex. HJ DNA is sandwiched between 2 RuvA tetramers; dsDNA enters through RuvA and exits via RuvB. An RuvB hexamer assembles on each DNA strand where it exits the tetramer. Each RuvB hexamer is contacted by two RuvA subunits (via domain III) on 2 adjacent RuvB subunits; this complex drives branch migration. In the full resolvosome a probable DNA-RuvA(4)-RuvB(12)-RuvC(2) complex forms which resolves the HJ.

It localises to the cytoplasm. In terms of biological role, the RuvA-RuvB-RuvC complex processes Holliday junction (HJ) DNA during genetic recombination and DNA repair, while the RuvA-RuvB complex plays an important role in the rescue of blocked DNA replication forks via replication fork reversal (RFR). RuvA specifically binds to HJ cruciform DNA, conferring on it an open structure. The RuvB hexamer acts as an ATP-dependent pump, pulling dsDNA into and through the RuvAB complex. HJ branch migration allows RuvC to scan DNA until it finds its consensus sequence, where it cleaves and resolves the cruciform DNA. The polypeptide is Holliday junction branch migration complex subunit RuvA (Teredinibacter turnerae (strain ATCC 39867 / T7901)).